The chain runs to 144 residues: Mannitol-specific phosphotransferase enzyme IIA component (144 aa).

A PTS EIIA type-2 domain is found at 3-142; the sequence is ELFSNDNIFL…EEIKQVFEEA (140 aa). The Tele-phosphohistidine intermediate role is filled by His63. His63 is modified (phosphohistidine; by HPr).

As to quaternary structure, homodimer or homotrimer. Seems to be a monomer when not phosphorylated.

The protein resides in the cytoplasm. Its function is as follows. The phosphoenolpyruvate-dependent sugar phosphotransferase system (sugar PTS), a major carbohydrate active transport system, catalyzes the phosphorylation of incoming sugar substrates concomitantly with their translocation across the cell membrane. The enzyme II CmtAB PTS system is involved in D-mannitol transport. In Staphylococcus aureus (strain MRSA252), this protein is Mannitol-specific phosphotransferase enzyme IIA component (mtlF).